The chain runs to 306 residues: Formimidoylglutamase (306 aa).

The segment covering 1–13 (MFQNATDWTPTST) has biased composition (polar residues). A disordered region spans residues 1–36 (MFQNATDWTPTSTDPRDEQFGGVVEPVPTPSDADDY). Positions 123, 147, 149, 151, 234, and 236 each coordinate Mn(2+).

It belongs to the arginase family. Mn(2+) serves as cofactor.

The catalysed reaction is N-formimidoyl-L-glutamate + H2O = formamide + L-glutamate. It participates in amino-acid degradation; L-histidine degradation into L-glutamate; L-glutamate from N-formimidoyl-L-glutamate (hydrolase route): step 1/1. Functionally, catalyzes the conversion of N-formimidoyl-L-glutamate to L-glutamate and formamide. The sequence is that of Formimidoylglutamase from Halobacterium salinarum (strain ATCC 29341 / DSM 671 / R1).